Reading from the N-terminus, the 1257-residue chain is MHHQQRLRANGGRGGTGLGAGSGPVSGGHSPLCAHCRGQLLPHPEEPIVMALGQQWHCDCFRCSVCEGHLHNWYFEREGLLYCREDYYGRFGDACQQCMAVITGPVMVAGEHKFHPECFCCTACGSFIGEGESYALVERSKLYCGQCYGKRSCQPADAKARITTAGKPMHSIRLVEIPKDATPGLRVDGVALDDGCPTVRITDLFCNFFLWLTSMAEQCCGAPYRIDVNLTNLHIGDRILEVNGTPVSDSSVEQIDKLIRSNEKMLQLTVEHDPVQVCRSCSQADIQRAMSASTLILPLSTSASSVEVGRERLYKTPGEQGTKARKLRQATNASTTIPPAAGATAMTQLKEKERCSSLSKLLDEQHQAQQHSAHPQLYDLSRTQSCRVVQKPQRIFRATDLVIGEKLGEGFFGKVFKVTHRQSGEVMVLKELHRADEEAQRNFIKEVAVLRLLDHRHVLKFIGVLYKDKKLHMVTEYVAGGCLKELIHDPAQVLPWPQRVRLARDIACGMSYLHSMNIIHRDLNSMNCLVREDRSVIVADFGLARSVDAPRLPSGNMTPGGYGSGANSDAPMSPSGTLRRSKSRQRRQRYTVVGNPYWMAPEMMKGLKYDEKVDVFSFGIMLCEIIGRVEADPDFMPRNSDFSLNQQEFREKFCAQCPEPFVKVAFVCCDLNPDMRPCFETLHVWLQRLADDLAADRVPPERLLHEIETFQEWYASSEDALSPTSQRSLNNLDELVKSAVDSEISPVEKEKENMVIKPQDIPKSPHLGKDFSPSGERLRDSMRARRRQRFLGAQEERRNLTPDTESKERALKKALKKCRPFGERGYLVDLRAGAELQLEDVRDLNTYSDVDSSCDTSLNYHDVNNLPAAQEDENTVKPGKEELLEESTNKPSNQESQHHRLAIDDMRTRLNQCRSKFEHLEEASRRNFNQSQHSMKNFFKTPPVALKMFQRLEHEAAALNGGNNCPPPPPRTQRINQTPIFGRKNPPVAIVGQKLQHAESLEDLASSGVAKQLATPAPKRSKATATTKGGQSSNPPLFLPPSLNISVALNSNGNVTTTTNTNSSCPPSASDWLPKKHKLTLPLPSAQQQRTSSNHRLPMCNNKGKTLKPLPSRTGSQGIPASNCVSPTRSSRPGSPTKHLAQRHTAATAQRLTNAAATHQQQHQQQSSKTTRLNILSPEKVHRLGARLTDQKQKMREEAAATASSVGGAGCAAGTAAGSLNGHRTIGSSGTPNSAVGERRRRAAPSPPVRTHFNTRC.

The segment at 1 to 24 is disordered; it reads MHHQQRLRANGGRGGTGLGAGSGP. Residues 1–147 are interaction with LATS1; that stretch reads MHHQQRLRAN…ERSKLYCGQC (147 aa). Gly residues predominate over residues 11–24; it reads GGRGGTGLGAGSGP. LIM zinc-binding domains are found at residues 31 to 93 and 94 to 154; these read PLCA…RFGD and ACQQ…RSCQ. The region spanning 174–274 is the PDZ domain; sequence LVEIPKDATP…MLQLTVEHDP (101 aa). The Protein kinase domain occupies 401 to 686; sequence LVIGEKLGEG…PCFETLHVWL (286 aa). Residues 407–415 and Lys-430 contribute to the ATP site; that span reads LGEGFFGKV. Residue Asp-522 is part of the active site. 3 disordered regions span residues 552–587, 759–811, and 881–900; these read LPSGNMTPGGYGSGANSDAPMSPSGTLRRSKSRQRR, QDIP…ERAL, and EELLEESTNKPSNQESQHHR. Basic and acidic residues predominate over residues 794 to 811; sequence QEERRNLTPDTESKERAL. Ser-1000 carries the phosphoserine modification. 3 disordered regions span residues 1010–1037, 1085–1182, and 1212–1257; these read AKQLATPAPKRSKATATTKGGQSSNPPL, SAQQ…EKVH, and AAGT…NTRC. Polar residues-rich tracts occupy residues 1085–1095 and 1113–1125; these read SAQQQRTSSNH and RTGSQGIPASNCV. Composition is skewed to low complexity over residues 1126–1137 and 1145–1166; these read SPTRSSRPGSPT and TAATAQRLTNAAATHQQQHQQQ.

Belongs to the protein kinase superfamily. TKL Ser/Thr protein kinase family. Interacts with LATS1, and this interaction inhibits phosphorylation of tsr/cofilin. Phosphorylated on serine and/or threonine residues by ROCK1. Phosphorylated by PAK4 resulting in increased LIMK1 ability to phosphorylate cofilin. May be dephosphorylated and inactivated by SSH1. In terms of tissue distribution, expressed throughout the imaginal disks of the eye, leg and wing.

It localises to the cytoplasm. Its subcellular location is the cleavage furrow. The protein localises to the midbody. The enzyme catalyses L-seryl-[protein] + ATP = O-phospho-L-seryl-[protein] + ADP + H(+). It carries out the reaction L-threonyl-[protein] + ATP = O-phospho-L-threonyl-[protein] + ADP + H(+). Protein kinase which regulates actin filament dynamics. Phosphorylates and inactivates the actin binding/depolymerizing factor tsr/cofilin, thereby stabilizing the actin cytoskeleton. Modulation of actin cytoskeleton dynamics may be essential for imaginal disk morphogenesis and axon guidance. The sequence is that of LIM domain kinase 1 (LIMK1) from Drosophila melanogaster (Fruit fly).